A 418-amino-acid chain; its full sequence is Light-independent protochlorophyllide reductase subunit N (418 aa).

Positions 17, 42, and 103 each coordinate [4Fe-4S] cluster.

Belongs to the BchN/ChlN family. Protochlorophyllide reductase is composed of three subunits; ChlL, ChlN and ChlB. Forms a heterotetramer of two ChlB and two ChlN subunits. [4Fe-4S] cluster serves as cofactor.

It catalyses the reaction chlorophyllide a + oxidized 2[4Fe-4S]-[ferredoxin] + 2 ADP + 2 phosphate = protochlorophyllide a + reduced 2[4Fe-4S]-[ferredoxin] + 2 ATP + 2 H2O. The protein operates within porphyrin-containing compound metabolism; chlorophyll biosynthesis (light-independent). Functionally, component of the dark-operative protochlorophyllide reductase (DPOR) that uses Mg-ATP and reduced ferredoxin to reduce ring D of protochlorophyllide (Pchlide) to form chlorophyllide a (Chlide). This reaction is light-independent. The NB-protein (ChlN-ChlB) is the catalytic component of the complex. The chain is Light-independent protochlorophyllide reductase subunit N from Prochlorococcus marinus (strain MIT 9312).